Consider the following 351-residue polypeptide: Probable RNA methyltransferase BAV1540 (351 aa).

E90 functions as the Proton acceptor in the catalytic mechanism. The region spanning 93 to 319 is the Radical SAM core domain; the sequence is LLPRDGLCVS…VKVRNSAGQD (227 aa). C100 and C324 are disulfide-bonded. The [4Fe-4S] cluster site is built by C107, C111, and C114. S-adenosyl-L-methionine-binding positions include 152-153, S182, 205-207, and N281; these read GE and SLH. C324 functions as the S-methylcysteine intermediate in the catalytic mechanism.

This sequence belongs to the radical SAM superfamily. RlmN family. It depends on [4Fe-4S] cluster as a cofactor.

It localises to the cytoplasm. This Bordetella avium (strain 197N) protein is Probable RNA methyltransferase BAV1540.